A 458-amino-acid polypeptide reads, in one-letter code: Smoothelin-like protein 2 (458 aa).

Positions 24–88 form a coiled coil; the sequence is LEGAVRALHE…RQVESLGLTT (65 aa). Disordered stretches follow at residues 87-111, 123-142, and 151-312; these read TTGL…RAPR, FSLS…SELE, and IIEN…GAQA. The span at 94-104 shows a compositional bias: pro residues; sequence PGTPSPPPAPG. Residue Thr-96 is modified to Phosphothreonine. A phosphoserine mark is found at Ser-98, Ser-126, and Ser-131. Positions 131–142 are enriched in basic and acidic residues; sequence SLDHHDEASELE. Low complexity-rich tracts occupy residues 158–167 and 209–220; these read PGADPGDGPP and TSATALSPTSAA. The span at 225 to 244 shows a compositional bias: polar residues; the sequence is LSSSPSEATTPWTPSPSEKN. Low complexity predominate over residues 245 to 254; sequence SSLPRSLSSS. 3 positions are modified to phosphoserine: Ser-252, Ser-254, and Ser-267. The segment covering 270–283 has biased composition (pro residues); it reads LVTPPQSPPSPQPP. Thr-272 carries the post-translational modification Phosphothreonine. A Phosphoserine modification is found at Ser-276. Residues 290 to 299 show a composition bias toward basic and acidic residues; that stretch reads RPGERRRELV. Positions 300-310 are enriched in polar residues; the sequence is RSQTLPRTSGA. Ser-341 carries the post-translational modification Phosphoserine. The Calponin-homology (CH) domain occupies 348–455; that stretch reads SSIKQILLEW…YVQSLYNHLR (108 aa).

This sequence belongs to the smoothelin family.

The sequence is that of Smoothelin-like protein 2 (SMTNL2) from Bos taurus (Bovine).